A 531-amino-acid chain; its full sequence is Methyl-accepting chemotaxis protein McpN (531 aa).

The Cytoplasmic segment spans residues 1 to 24 (MNESVARVFDRILRGLGLKTLNAQ). Residues 25-45 (FLLSYALMFGLAACASVALYL) form a helical membrane-spanning segment. Topologically, residues 46 to 174 (SMSISPETIN…LMSARADSVQ (129 aa)) are periplasmic. Positions 52 to 140 (ETINVAGAQR…AMLDQVAQPA (89 aa)) are pilJ-type. The N-box signature appears at 54 to 65 (INVAGAQRMLSQ). Arg-61 contacts nitrate. Residues 175-195 (HTQMWIAFGCLLAILVLVVLG) traverse the membrane as a helical segment. Residues 196–531 (RQFGLAPLMR…LRVVLGRFRT (336 aa)) lie on the Cytoplasmic side of the membrane. Positions 201–254 (APLMRQLRGLEVALTEVGAANFTHALAAGHADNEIGRIVAGYERMRQDVSGLLA) constitute an HAMP domain. Residues 259-495 (SAAETDKDVA…DIDRNITNVS (237 aa)) enclose the Methyl-accepting transducer domain.

The protein belongs to the methyl-accepting chemotaxis (MCP) protein family. Ligand free ligand-binding domain (LBD) is present in a monomer-dimer equilibrium. Nitrate binding to the periplasmic LBD stabilizes the homodimer.

The protein resides in the cell inner membrane. Functionally, chemotactic-signal transducers respond to changes in the concentration of attractants and repellents in the environment, transduce a signal from the outside to the inside of the cell, and facilitate sensory adaptation through the variation of the level of methylation. McpN is a chemoreceptor that recognizes specifically nitrate and mediates chemoattraction. Binds nitrate specifically and shows no affinity for other ligands such as nitrite. McpN-mediated taxis occurs only under nitrate starvation conditions. This is Methyl-accepting chemotaxis protein McpN from Pseudomonas aeruginosa (strain ATCC 15692 / DSM 22644 / CIP 104116 / JCM 14847 / LMG 12228 / 1C / PRS 101 / PAO1).